Consider the following 250-residue polypeptide: Small ribosomal subunit protein uS3 (250 aa).

In terms of domain architecture, KH type-2 spans V39 to D107. A disordered region spans residues M215 to E250. A compositionally biased stretch (basic and acidic residues) spans A220–E250.

It belongs to the universal ribosomal protein uS3 family. Part of the 30S ribosomal subunit. Forms a tight complex with proteins S10 and S14.

Binds the lower part of the 30S subunit head. Binds mRNA in the 70S ribosome, positioning it for translation. In Acinetobacter baumannii (strain SDF), this protein is Small ribosomal subunit protein uS3.